A 243-amino-acid polypeptide reads, in one-letter code: F-box protein pof15 (243 aa).

An F-box domain is found at 28–73; that stretch reads QTSSTLLPVEVIDSVMQYLPAHDVIQSSFASYPLTLIANKIIRARL.

The protein operates within protein modification; protein ubiquitination. Functionally, probable substrate recognition component of a SCF (SKP1-CUL1-F-box protein) E3 ubiquitin-protein ligase complex that mediates the ubiquitination and subsequent proteasomal degradation of target proteins. The chain is F-box protein pof15 (pof15) from Schizosaccharomyces pombe (strain 972 / ATCC 24843) (Fission yeast).